The following is a 371-amino-acid chain: Cytochrome b (371 aa).

4 helical membrane-spanning segments follow: residues 25-45 (FGSMLLTCLALQVLTGFFLAV), 69-90 (WMMQNLHAIGASMFFICIYIHI), 105-125 (WMSGITLLITLMATAFFGYVL), and 170-190 (FFALHFILPFAIISLSSLHII). The heme b site is built by His-75 and His-89. Heme b contacts are provided by His-174 and His-188. Residue His-193 coordinates a ubiquinone. 4 consecutive transmembrane segments (helical) span residues 218-238 (HKDLLLLTLMMLSLLIIVSFF), 280-300 (LGGALALVMSIMILFTIPFTH), 312-332 (FSQLMFWTLVSTFITITWAAT), and 339-358 (FIVISQVTSTLYFTFFLLIP).

The protein belongs to the cytochrome b family. As to quaternary structure, the cytochrome bc1 complex contains 3 respiratory subunits (MT-CYB, CYC1 and UQCRFS1), 2 core proteins (UQCRC1 and UQCRC2) and probably 6 low-molecular weight proteins. Heme b is required as a cofactor.

It is found in the mitochondrion inner membrane. Functionally, component of the ubiquinol-cytochrome c reductase complex (complex III or cytochrome b-c1 complex) that is part of the mitochondrial respiratory chain. The b-c1 complex mediates electron transfer from ubiquinol to cytochrome c. Contributes to the generation of a proton gradient across the mitochondrial membrane that is then used for ATP synthesis. This is Cytochrome b (MT-CYB) from Leiopython albertisii (Northern white-lipped python).